Here is a 614-residue protein sequence, read N- to C-terminus: MSGYSSDRDRGRDRGFGAPRFGGSRAGPLSGKKFGNPGEKLVKKKWDLDEPPKFEKNFYQEHPDLARRTAQEVETYRRSKEITVRGHNCPKPVLNFYEANFPANVMDVIARQNFTEPTAIQAQGWPVALSGLDMVGVAQTGSGKTLSYLLPAIVHINHQPFLERGDGPICLVLAPTRELAQQVQQVAAEYCRACRLKSTCIYGGAPKGPQIRDLERGVEICIATPGRLIDFLECGKTNLRRTTYLVLDEADRMLDMGFEPQIRKIVDQIRPDRQTLMWSATWPKEVRQLAEDFLKDYIHINIGALELSANHNILQIVDVCHDVEKDEKLIRLMEEIMSEKENKTIVFVETKRRCDELTRKMRRDGWPAMGIHGDKSQQERDWVLNEFKHGKAPILIATDVASRGLDVEDVKFVINYDYPNSSEDYIHRIGRTARSTKTGTAYTFFTPNNIKQVSDLISVLREANQAINPKLLQLVEDRGSGRSRGRGGMKDDRRDRYSAGKRGGFNTFRDRENYDRGYSSLLKRDFGAKTQNGAYSAANYTNGSFGSNFVSAGIQTSFRTGNPTGTYQNGYDSTQQYGSNVPNMHNGMNQQAYAYPATAAAPMIGYPMPTGYSQ.

Residues 1–15 are compositionally biased toward basic and acidic residues; it reads MSGYSSDRDRGRDRG. Positions 1–46 are disordered; that stretch reads MSGYSSDRDRGRDRGFGAPRFGGSRAGPLSGKKFGNPGEKLVKKKW. Ser-24 carries the phosphoserine modification. Position 32 is an N6-acetyllysine; alternate (Lys-32). Residue Lys-32 forms a Glycyl lysine isopeptide (Lys-Gly) (interchain with G-Cter in SUMO2); alternate linkage. N6-acetyllysine occurs at positions 33 and 40. Lys-45 participates in a covalent cross-link: Glycyl lysine isopeptide (Lys-Gly) (interchain with G-Cter in SUMO2). Lys-53 participates in a covalent cross-link: Glycyl lysine isopeptide (Lys-Gly) (interchain with G-Cter in SUMO2); alternate. Residue Lys-53 forms a Glycyl lysine isopeptide (Lys-Gly) (interchain with G-Cter in SUMO); alternate linkage. Residue Lys-53 forms a Glycyl lysine isopeptide (Lys-Gly) (interchain with G-Cter in SUMO1); alternate linkage. Positions 94-122 match the Q motif motif; it reads LNFYEANFPANVMDVIARQNFTEPTAIQA. ATP-binding positions include 114 to 116, Gln-121, and 138 to 145; these read FTE and AQTGSGKT. In terms of domain architecture, Helicase ATP-binding spans 125 to 300; the sequence is WPVALSGLDM…EDFLKDYIHI (176 aa). At Lys-236 the chain carries N6-acetyllysine. Positions 248–251 match the DEAD box motif; that stretch reads DEAD. Residue Tyr-297 is modified to Phosphotyrosine. The Helicase C-terminal domain occupies 328–475; the sequence is KLIRLMEEIM…AINPKLLQLV (148 aa). Residues Lys-340, Lys-343, Lys-388, Lys-391, Lys-411, Lys-437, Lys-451, and Lys-470 each participate in a glycyl lysine isopeptide (Lys-Gly) (interchain with G-Cter in SUMO2) cross-link. A disordered region spans residues 477–504; it reads DRGSGRSRGRGGMKDDRRDRYSAGKRGG. Residues 477 to 614 form a transactivation domain region; the sequence is DRGSGRSRGR…GYPMPTGYSQ (138 aa). Ser-480 carries the phosphoserine modification. Residues 488-498 are compositionally biased toward basic and acidic residues; it reads GMKDDRRDRYS. Ser-520 carries the phosphoserine modification. Lys-523 participates in a covalent cross-link: Glycyl lysine isopeptide (Lys-Gly) (interchain with G-Cter in SUMO2).

This sequence belongs to the DEAD box helicase family. DDX5/DBP2 subfamily. In terms of assembly, identified in the spliceosome C complex. Component of a ribonucleoprotein complex containing mRNAs and RNA-binding proteins including DDX5, HNRNPH2 and SRSF1 as well as splicing regulator ARVCF. Interacts with RBM4; the interaction occurs in an RNA-independent manner. Interacts with AGO1 and AGO2. Interacts with ESR1, AR, EP300, CREBBP, POLR2A, TP53, RUNX2 and HDAC1. Self-associates. Interacts with DDX17. Interacts with BRDT. The large PER complex involved in the repression of transcriptional termination is composed of at least PER2, CDK9, DDX5, DHX9, NCBP1 and POLR2A (active). Interacts with DHX36; this interaction occurs in a RNA-dependent manner. Interacts with NUPR1. Interacts with ERCC6. Interacts with DDX3X in the cytoplasm; this interaction may be more efficient when both proteins are unphosphorylated. Post-translationally, sumoylated; sumoylation, promoted by PIAS1, promotes interaction with HDAC1 and transcriptional repression activity. Sumoylation also significantly increases stability, and reduces polyubiquitination. In terms of processing, polyubiquitinated, leading to proteasomal degradation. Weakly phosphorylated in the G1/S phase of the cell cycle and much more at G2/M, especially at Thr and Tyr residues.

Its subcellular location is the nucleus. It localises to the nucleolus. It is found in the cytoplasm. It catalyses the reaction ATP + H2O = ADP + phosphate + H(+). Involved in the alternative regulation of pre-mRNA splicing; its RNA helicase activity is necessary for increasing tau exon 10 inclusion and occurs in a RBM4-dependent manner. Binds to the tau pre-mRNA in the stem-loop region downstream of exon 10. The rate of ATP hydrolysis is highly stimulated by single-stranded RNA. Involved in transcriptional regulation; the function is independent of the RNA helicase activity. Transcriptional coactivator for androgen receptor AR but probably not ESR1. Synergizes with DDX17 and SRA1 RNA to activate MYOD1 transcriptional activity and involved in skeletal muscle differentiation. Transcriptional coactivator for p53/TP53 and involved in p53/TP53 transcriptional response to DNA damage and p53/TP53-dependent apoptosis. Transcriptional coactivator for RUNX2 and involved in regulation of osteoblast differentiation. Acts as a transcriptional repressor in a promoter-specific manner; the function probably involves association with histone deacetylases, such as HDAC1. As component of a large PER complex is involved in the inhibition of 3' transcriptional termination of circadian target genes such as PER1 and NR1D1 and the control of the circadian rhythms. The protein is Probable ATP-dependent RNA helicase DDX5 (DDX5) of Pongo abelii (Sumatran orangutan).